A 349-amino-acid chain; its full sequence is GTP 3',8-cyclase (349 aa).

In terms of domain architecture, Radical SAM core spans 24–249; it reads PFGRAVTYLR…KDMSYRTGGP (226 aa). Residue arginine 33 coordinates GTP. The [4Fe-4S] cluster site is built by cysteine 40 and cysteine 44. Tyrosine 46 lines the S-adenosyl-L-methionine pocket. Cysteine 47 is a [4Fe-4S] cluster binding site. GTP is bound at residue arginine 82. Glycine 86 contacts S-adenosyl-L-methionine. Threonine 116 contacts GTP. Residue serine 140 participates in S-adenosyl-L-methionine binding. A GTP-binding site is contributed by lysine 176. Methionine 210 contacts S-adenosyl-L-methionine. Residues cysteine 273 and cysteine 276 each contribute to the [4Fe-4S] cluster site. 278-280 contacts GTP; it reads RVR. Cysteine 290 is a [4Fe-4S] cluster binding site.

It belongs to the radical SAM superfamily. MoaA family. In terms of assembly, monomer and homodimer. The cofactor is [4Fe-4S] cluster.

The enzyme catalyses GTP + AH2 + S-adenosyl-L-methionine = (8S)-3',8-cyclo-7,8-dihydroguanosine 5'-triphosphate + 5'-deoxyadenosine + L-methionine + A + H(+). The protein operates within cofactor biosynthesis; molybdopterin biosynthesis. In terms of biological role, catalyzes the cyclization of GTP to (8S)-3',8-cyclo-7,8-dihydroguanosine 5'-triphosphate. The sequence is that of GTP 3',8-cyclase from Sinorhizobium medicae (strain WSM419) (Ensifer medicae).